A 436-amino-acid polypeptide reads, in one-letter code: Gamma-glutamyl phosphate reductase (436 aa).

It belongs to the gamma-glutamyl phosphate reductase family.

Its subcellular location is the cytoplasm. The enzyme catalyses L-glutamate 5-semialdehyde + phosphate + NADP(+) = L-glutamyl 5-phosphate + NADPH + H(+). Its pathway is amino-acid biosynthesis; L-proline biosynthesis; L-glutamate 5-semialdehyde from L-glutamate: step 2/2. Functionally, catalyzes the NADPH-dependent reduction of L-glutamate 5-phosphate into L-glutamate 5-semialdehyde and phosphate. The product spontaneously undergoes cyclization to form 1-pyrroline-5-carboxylate. In Prochlorococcus marinus (strain MIT 9515), this protein is Gamma-glutamyl phosphate reductase.